The sequence spans 181 residues: Probable Brix domain-containing ribosomal biogenesis protein (181 aa).

The Brix domain occupies 5–181 (CKVIITTSRE…RIKKVVYRHV (177 aa)).

Functionally, probably involved in the biogenesis of the ribosome. The chain is Probable Brix domain-containing ribosomal biogenesis protein from Pyrobaculum aerophilum (strain ATCC 51768 / DSM 7523 / JCM 9630 / CIP 104966 / NBRC 100827 / IM2).